Consider the following 403-residue polypeptide: S-adenosylmethionine synthase (403 aa).

Residue His-15 participates in ATP binding. Asp-17 provides a ligand contact to Mg(2+). Glu-43 is a binding site for K(+). L-methionine contacts are provided by Glu-56 and Gln-99. The flexible loop stretch occupies residues 99 to 109; it reads QSPDINQGVDR. ATP contacts are provided by residues 166–168, 232–233, Asp-241, 247–248, Ala-264, and Lys-268; these read DAK, KF, and RK. Position 241 (Asp-241) interacts with L-methionine. Lys-272 contributes to the L-methionine binding site.

The protein belongs to the AdoMet synthase family. Homotetramer; dimer of dimers. Mg(2+) serves as cofactor. K(+) is required as a cofactor.

The protein resides in the cytoplasm. It carries out the reaction L-methionine + ATP + H2O = S-adenosyl-L-methionine + phosphate + diphosphate. Its pathway is amino-acid biosynthesis; S-adenosyl-L-methionine biosynthesis; S-adenosyl-L-methionine from L-methionine: step 1/1. Catalyzes the formation of S-adenosylmethionine (AdoMet) from methionine and ATP. The overall synthetic reaction is composed of two sequential steps, AdoMet formation and the subsequent tripolyphosphate hydrolysis which occurs prior to release of AdoMet from the enzyme. This chain is S-adenosylmethionine synthase, found in Xylella fastidiosa (strain Temecula1 / ATCC 700964).